The chain runs to 111 residues: Probable 4-amino-4-deoxy-L-arabinose-phosphoundecaprenol flippase subunit ArnE (111 aa).

The next 3 helical transmembrane spans lie at 38 to 58 (LWLGLALICMGAAMVLWLLVL), 61 to 81 (LPVGIAYPMLSLNFVWVTLAA), and 91 to 111 (PRHWFGVALIISGIIILGSAA). In terms of domain architecture, EamA spans 40–109 (LGLALICMGA…IISGIIILGS (70 aa)).

It belongs to the ArnE family. As to quaternary structure, heterodimer of ArnE and ArnF.

It localises to the cell inner membrane. The protein operates within bacterial outer membrane biogenesis; lipopolysaccharide biosynthesis. Translocates 4-amino-4-deoxy-L-arabinose-phosphoundecaprenol (alpha-L-Ara4N-phosphoundecaprenol) from the cytoplasmic to the periplasmic side of the inner membrane. In Salmonella enteritidis PT4 (strain P125109), this protein is Probable 4-amino-4-deoxy-L-arabinose-phosphoundecaprenol flippase subunit ArnE.